We begin with the raw amino-acid sequence, 210 residues long: FMN-dependent NADH:quinone oxidoreductase 8 (210 aa).

Residues Ser-10 and 16 to 18 (SIS) each bind FMN.

It belongs to the azoreductase type 1 family. In terms of assembly, homodimer. The cofactor is FMN.

It carries out the reaction 2 a quinone + NADH + H(+) = 2 a 1,4-benzosemiquinone + NAD(+). It catalyses the reaction N,N-dimethyl-1,4-phenylenediamine + anthranilate + 2 NAD(+) = 2-(4-dimethylaminophenyl)diazenylbenzoate + 2 NADH + 2 H(+). Its function is as follows. Quinone reductase that provides resistance to thiol-specific stress caused by electrophilic quinones. In terms of biological role, also exhibits azoreductase activity. Catalyzes the reductive cleavage of the azo bond in aromatic azo compounds to the corresponding amines. The sequence is that of FMN-dependent NADH:quinone oxidoreductase 8 from Burkholderia lata (strain ATCC 17760 / DSM 23089 / LMG 22485 / NCIMB 9086 / R18194 / 383).